The sequence spans 268 residues: 3-deoxy-manno-octulosonate cytidylyltransferase (268 aa).

Belongs to the KdsB family.

It localises to the cytoplasm. The catalysed reaction is 3-deoxy-alpha-D-manno-oct-2-ulosonate + CTP = CMP-3-deoxy-beta-D-manno-octulosonate + diphosphate. The protein operates within nucleotide-sugar biosynthesis; CMP-3-deoxy-D-manno-octulosonate biosynthesis; CMP-3-deoxy-D-manno-octulosonate from 3-deoxy-D-manno-octulosonate and CTP: step 1/1. It functions in the pathway bacterial outer membrane biogenesis; lipopolysaccharide biosynthesis. Activates KDO (a required 8-carbon sugar) for incorporation into bacterial lipopolysaccharide in Gram-negative bacteria. This Ralstonia nicotianae (strain ATCC BAA-1114 / GMI1000) (Ralstonia solanacearum) protein is 3-deoxy-manno-octulosonate cytidylyltransferase.